Consider the following 347-residue polypeptide: Phosphoribosylformylglycinamidine cyclo-ligase (347 aa).

It belongs to the AIR synthase family.

The protein localises to the cytoplasm. It catalyses the reaction 2-formamido-N(1)-(5-O-phospho-beta-D-ribosyl)acetamidine + ATP = 5-amino-1-(5-phospho-beta-D-ribosyl)imidazole + ADP + phosphate + H(+). Its pathway is purine metabolism; IMP biosynthesis via de novo pathway; 5-amino-1-(5-phospho-D-ribosyl)imidazole from N(2)-formyl-N(1)-(5-phospho-D-ribosyl)glycinamide: step 2/2. The chain is Phosphoribosylformylglycinamidine cyclo-ligase from Prochlorococcus marinus (strain AS9601).